The following is a 330-amino-acid chain: Aspartate--ammonia ligase (330 aa).

This sequence belongs to the class-II aminoacyl-tRNA synthetase family. AsnA subfamily.

The protein resides in the cytoplasm. It carries out the reaction L-aspartate + NH4(+) + ATP = L-asparagine + AMP + diphosphate + H(+). The protein operates within amino-acid biosynthesis; L-asparagine biosynthesis; L-asparagine from L-aspartate (ammonia route): step 1/1. The polypeptide is Aspartate--ammonia ligase (Streptococcus pyogenes serotype M1).